The following is a 287-amino-acid chain: Oxaloacetate decarboxylase (287 aa).

Ser50 provides a ligand contact to substrate. Asp88 lines the Mg(2+) pocket. Substrate-binding residues include Arg159 and His235.

Belongs to the isocitrate lyase/PEP mutase superfamily. Oxaloacetate decarboxylase family. Homotetramer; dimer of dimers. Mg(2+) serves as cofactor.

It carries out the reaction oxaloacetate + H(+) = pyruvate + CO2. Functionally, catalyzes the decarboxylation of oxaloacetate into pyruvate. Seems to play a role in maintaining cellular concentrations of bicarbonate and pyruvate. This Pseudomonas paraeruginosa (strain DSM 24068 / PA7) (Pseudomonas aeruginosa (strain PA7)) protein is Oxaloacetate decarboxylase.